Reading from the N-terminus, the 382-residue chain is DNA replication and repair protein RecF (382 aa).

Residue 30 to 37 coordinates ATP; it reads GPNGHGKS.

This sequence belongs to the RecF family.

It localises to the cytoplasm. The RecF protein is involved in DNA metabolism; it is required for DNA replication and normal SOS inducibility. RecF binds preferentially to single-stranded, linear DNA. It also seems to bind ATP. The polypeptide is DNA replication and repair protein RecF (Magnetococcus marinus (strain ATCC BAA-1437 / JCM 17883 / MC-1)).